The following is a 591-amino-acid chain: MSFVIAQPEMIAAAAGELASIRSAINAANAAAAAQTTGVMSAAADEVSTAVAALFSSHAQAYQAASAQAAAFHAQVVRTLTVDAGAYASAEAANAGPNMLAAVNAPAQALLGRPLIGNGANGAPGTGQAGGDGGLLFGNGGNGGSGAPGQAGGAGGAAGFFGNGGNGGDGGAGANGGAGGTAGWFFGFGGNGGAGGIGVAGINGGLGGAGGDGGNAGFFGNGGNGGMGGAGAAGVNAVNPGLATPVTPAANGGNGLNLVGVPGTAGGGADGANGSAIGQAGGAGGDGGNASTSGGIGIAQTGGAGGAGGAGGDGAPGGNGGNGGSVEHTGATGSSASGGNGATGGNGGVGAPGGAGGNGGHVSGGSVNTAGAGGKGGNGGTGGAGGPGGHGGSVLSGPVGDSGNGGAGGDGGAGVSATDIAGTGGRGGNGGHGGLWIGNGGDGGAGGVGGVGGAGAAGAIGGHGGDGGSVNTPIGGSEAGDGGKGGLGGDGGGRGIFGQFGAGGAGGAGGVGGAGGAGGTGGGGGNGGAIFNAGTPGAAGTGGDGGVGGTGAAGGKGGAGGSGGVNGATGADGAKGLDGATGGKGNNGNPG.

One can recognise a PE domain in the interval 1-93 (MSFVIAQPEM…AGAYASAEAA (93 aa)). Residues 94–591 (NAGPNMLAAV…GGKGNNGNPG (498 aa)) are PGRS. Gly residues-rich tracts occupy residues 303-324 (GAGG…GNGG), 336-363 (ASGG…GHVS), 371-412 (GAGG…GDGG), 477-491 (SEAG…GGDG), 539-567 (AGTG…GVNG), and 579-591 (GATG…GNPG). Disordered regions lie at residues 303-412 (GAGG…GDGG), 468-491 (GSVN…GGDG), and 539-591 (AGTG…GNPG).

It belongs to the mycobacterial PE family. PGRS subfamily. In terms of assembly, interacts with human TLR4.

It is found in the host endoplasmic reticulum. Involved in endoplasmic reticulum (ER) stress-mediated apoptosis through human Toll-like receptor 4 (TLR4) signaling pathway. Localizes to the host ER, leading to ER stress, disruption of intracellular Ca(2+) homeostasis and increase of nitric oxide (NO) and reactive oxygen species (ROS) levels. Stress response results in caspase-8 activation and apoptosis of macrophage cells. Apoptosis may lead to dissemination of the bacteria, thereby spreading the disease. The chain is PE-PGRS family protein PE_PGRS5 from Mycobacterium tuberculosis (strain ATCC 25618 / H37Rv).